The following is a 62-amino-acid chain: [Ser6, Val10, Asp11]-phyllokinin (62 aa).

The signal sequence occupies residues 1–22; the sequence is MSFLKKSLLLVLFLGLVSFSIC. A propeptide spanning residues 23-51 is cleaved from the precursor; the sequence is EEEKRETEEEENEDDMDEESEEKKRESPD. Residues 24–62 are disordered; sequence EEKRETEEEENEDDMDEESEEKKRESPDRPPGFSPFRVD. Acidic residues predominate over residues 30–42; the sequence is EEEENEDDMDEES.

The protein belongs to the frog skin active peptide (FSAP) family. Bradykinin-related peptide subfamily. In terms of tissue distribution, expressed by the skin glands.

The protein resides in the secreted. Its function is as follows. Induces relaxation of rat smooth muscle from tail artery and contraction of that from ileum, urinary bladder and uterus. Binds to both bradykinin receptor B1 (BDKRB1) and B2 (BDKRB2). The chain is [Ser6, Val10, Asp11]-phyllokinin from Agalychnis spurrelli (Gliding leaf frog).